The chain runs to 24 residues: Skin secreted peptide 1 (24 aa).

As to expression, expressed by the skin glands.

Its subcellular location is the secreted. This Ascaphus truei (Coastal tailed frog) protein is Skin secreted peptide 1.